A 234-amino-acid polypeptide reads, in one-letter code: 2-C-methyl-D-erythritol 4-phosphate cytidylyltransferase (234 aa).

The protein belongs to the IspD/TarI cytidylyltransferase family. IspD subfamily.

The enzyme catalyses 2-C-methyl-D-erythritol 4-phosphate + CTP + H(+) = 4-CDP-2-C-methyl-D-erythritol + diphosphate. Its pathway is isoprenoid biosynthesis; isopentenyl diphosphate biosynthesis via DXP pathway; isopentenyl diphosphate from 1-deoxy-D-xylulose 5-phosphate: step 2/6. Functionally, catalyzes the formation of 4-diphosphocytidyl-2-C-methyl-D-erythritol from CTP and 2-C-methyl-D-erythritol 4-phosphate (MEP). In Syntrophus aciditrophicus (strain SB), this protein is 2-C-methyl-D-erythritol 4-phosphate cytidylyltransferase.